We begin with the raw amino-acid sequence, 417 residues long: uncharacterized protein (417 aa).

This sequence to M.tuberculosis Rv2067c.

This is an uncharacterized protein from Synechococcus sp. (strain ATCC 27144 / PCC 6301 / SAUG 1402/1) (Anacystis nidulans).